Reading from the N-terminus, the 541-residue chain is Membrane protein insertase YidC (541 aa).

6 helical membrane-spanning segments follow: residues 6 to 26 (NILLIGLLFVSFLLWQQWQAD), 325 to 345 (LVVDYGFLWWLAVPIHWLLMF), 349 to 369 (FVGNWGLAIILITLTVRGLLF), 420 to 440 (GGCLPIILQMPIFIALYWVLL), 457 to 477 (LSVQDPYYILPLLMGVSMFVM), and 500 to 520 (VIFTVFFLWFPAGLVLYWLVG).

It belongs to the OXA1/ALB3/YidC family. Type 1 subfamily. Interacts with the Sec translocase complex via SecD. Specifically interacts with transmembrane segments of nascent integral membrane proteins during membrane integration.

The protein localises to the cell inner membrane. Functionally, required for the insertion and/or proper folding and/or complex formation of integral membrane proteins into the membrane. Involved in integration of membrane proteins that insert both dependently and independently of the Sec translocase complex, as well as at least some lipoproteins. Aids folding of multispanning membrane proteins. The sequence is that of Membrane protein insertase YidC from Shewanella baltica (strain OS195).